Here is a 1077-residue protein sequence, read N- to C-terminus: Histone deacetylase 4 (1077 aa).

Positions 66–169 (REQQLQQELL…GKESAVASTE (104 aa)) form a coiled coil. Residues 117-312 (MLAMKHQQEL…NSSSGNVSTE (196 aa)) form an interaction with MEF2A region. Over residues 132-162 (KLERHRQEQELEKQHREQKLQQLKNKEKGKE) the composition is skewed to basic and acidic residues. Disordered regions lie at residues 132 to 167 (KLER…AVAS), 204 to 225 (KTQH…ASYN), and 239 to 327 (PLRK…AETS). The segment covering 205–224 (TQHSSLDQSSPPQSGVSASY) has biased composition (polar residues). Phosphoserine is present on S209. Residue S245 is modified to Phosphoserine; by CaMK4 and SIK1. Over residues 258 to 273 (KVAERRSSPLLRRKDG) the composition is skewed to basic and acidic residues. Over residues 289-310 (SACSSAPGSGPSSPNSSSGNVS) the composition is skewed to low complexity. A PxLPxI/L motif; mediates interaction with ANKRA2 and 14-3-3 proteins motif is present at residues 348–353 (PSLPNI). Position 349 is a phosphoserine (S349). S466 carries the phosphoserine; by CaMK4 and SIK1 modification. Disordered stretches follow at residues 508–530 (SKPS…ELRE), 542–582 (RLPG…RPAT), and 623–646 (RPLS…EPPT). A compositionally biased stretch (basic and acidic residues) spans 515-530 (RQPESHPEETEEELRE). A Glycyl lysine isopeptide (Lys-Gly) (interchain with G-Cter in SUMO) cross-link involves residue K557. S563, S630, and S631 each carry phosphoserine. Positions 627-639 (RAQSSPASATFPM) are enriched in polar residues. Residues 653-1077 (GLVYDTLMLK…EEPMEEEPPL (425 aa)) are histone deacetylase. 4 residues coordinate Zn(2+): C665, C667, H673, and C744. The active site involves H796. The Nuclear export signal motif lies at 1044-1077 (EEAETVTAMASLSVGVKPAEKRSEEEPMEEEPPL). Residues 1052–1077 (MASLSVGVKPAEKRSEEEPMEEEPPL) form a disordered region.

Belongs to the histone deacetylase family. HD type 2 subfamily. As to quaternary structure, homodimer. Homodimerization via its N-terminal domain. Interacts with HDAC7. Interacts with MEF2A, MEF2C, MEF2D, MORC2 and NR2C1. Interacts with a 14-3-3 chaperone proteins in a phosphorylation dependent manner. Interacts with 14-3-3 protein YWHAB. Interacts with KDM5B and AHRR. Interacts with BTBD14B. Interacts with MYOCD. Interacts (via PxLPxI/L motif) with ANKRA2 (via ankyrin repeats). Interacts with CUL7 (as part of the 3M complex); negatively regulated by ANKRA2. Interacts with EP300 in the presence of TFAP2C. Interacts with HSPA1A and HSPA1B leading to their deacetylation at 'Lys-77'. Interacts with ZBTB7B; the interaction allows the recruitment of HDAC4 on CD8 loci for deacetylation and possible inhibition of CD8 genes expression. Interacts with DHX36. Interacts with SIK3; this interaction leads to HDAC4 retention in the cytoplasm. Phosphorylated by CaMK4 at Ser-245, Ser-466 and Ser-630. Phosphorylation at other residues by CaMK2D is required for the interaction with 14-3-3. Phosphorylation at Ser-349, within the PxLPxI/L motif, impairs the binding of ANKRA2 but generates a high-affinity docking site for 14-3-3. In terms of processing, sumoylation on Lys-557 is promoted by the E3 SUMO-protein ligase RANBP2, and prevented by phosphorylation by CaMK4.

The protein localises to the nucleus. It localises to the cytoplasm. It catalyses the reaction N(6)-acetyl-L-lysyl-[histone] + H2O = L-lysyl-[histone] + acetate. Functionally, responsible for the deacetylation of lysine residues on the N-terminal part of the core histones (H2A, H2B, H3 and H4). Histone deacetylation gives a tag for epigenetic repression and plays an important role in transcriptional regulation, cell cycle progression and developmental events. Histone deacetylases act via the formation of large multiprotein complexes. Involved in muscle maturation via its interaction with the myocyte enhancer factors such as MEF2A, MEF2C and MEF2D. Deacetylates HSPA1A and HSPA1B at 'Lys-77' leading to their preferential binding to co-chaperone STUB1. This is Histone deacetylase 4 (Hdac4) from Rattus norvegicus (Rat).